A 341-amino-acid polypeptide reads, in one-letter code: Ketol-acid reductoisomerase (NADP(+)) (341 aa).

A KARI N-terminal Rossmann domain is found at 2–182 (TDIVYDKDAD…GGLRAGGIRT (181 aa)). NADP(+)-binding positions include 25–28 (YGSQ), K48, S51, S53, and 83–86 (DQHQ). H108 is a catalytic residue. Position 134 (G134) interacts with NADP(+). Positions 183-328 (TFTEETETDL…RELRKLFAWN (146 aa)) constitute a KARI C-terminal knotted domain. The Mg(2+) site is built by D191, E195, E227, and E231. S252 provides a ligand contact to substrate.

Belongs to the ketol-acid reductoisomerase family. Mg(2+) serves as cofactor.

It catalyses the reaction (2R)-2,3-dihydroxy-3-methylbutanoate + NADP(+) = (2S)-2-acetolactate + NADPH + H(+). The catalysed reaction is (2R,3R)-2,3-dihydroxy-3-methylpentanoate + NADP(+) = (S)-2-ethyl-2-hydroxy-3-oxobutanoate + NADPH + H(+). It participates in amino-acid biosynthesis; L-isoleucine biosynthesis; L-isoleucine from 2-oxobutanoate: step 2/4. The protein operates within amino-acid biosynthesis; L-valine biosynthesis; L-valine from pyruvate: step 2/4. Functionally, involved in the biosynthesis of branched-chain amino acids (BCAA). Catalyzes an alkyl-migration followed by a ketol-acid reduction of (S)-2-acetolactate (S2AL) to yield (R)-2,3-dihydroxy-isovalerate. In the isomerase reaction, S2AL is rearranged via a Mg-dependent methyl migration to produce 3-hydroxy-3-methyl-2-ketobutyrate (HMKB). In the reductase reaction, this 2-ketoacid undergoes a metal-dependent reduction by NADPH to yield (R)-2,3-dihydroxy-isovalerate. The chain is Ketol-acid reductoisomerase (NADP(+)) from Clavibacter sepedonicus (Clavibacter michiganensis subsp. sepedonicus).